The chain runs to 237 residues: Ribosomal RNA small subunit methyltransferase G (237 aa).

Residues Gly78, Phe83, 129–130, and Arg148 each bind S-adenosyl-L-methionine; that span reads AE.

It belongs to the methyltransferase superfamily. RNA methyltransferase RsmG family.

Its subcellular location is the cytoplasm. Its function is as follows. Specifically methylates the N7 position of a guanine in 16S rRNA. This Streptococcus pyogenes serotype M4 (strain MGAS10750) protein is Ribosomal RNA small subunit methyltransferase G.